The sequence spans 151 residues: Ubiquitin-conjugating enzyme E2 2 (151 aa).

The tract at residues Met1–Ala26 is disordered. The region spanning Ser4–Glu150 is the UBC core domain. Cys88 acts as the Glycyl thioester intermediate in catalysis.

This sequence belongs to the ubiquitin-conjugating enzyme family.

It localises to the cytoplasm. Its subcellular location is the nucleus. The catalysed reaction is S-ubiquitinyl-[E1 ubiquitin-activating enzyme]-L-cysteine + [E2 ubiquitin-conjugating enzyme]-L-cysteine = [E1 ubiquitin-activating enzyme]-L-cysteine + S-ubiquitinyl-[E2 ubiquitin-conjugating enzyme]-L-cysteine.. The protein operates within protein modification; protein ubiquitination. In terms of biological role, catalyzes the covalent attachment of ubiquitin to other proteins. Plays a role in transcription regulation by catalyzing the monoubiquitination of histone H2B to form H2BK123ub1. H2BK123ub1 gives a specific tag for epigenetic transcriptional activation and is also a prerequisite for H3K4me and H3K79me formation. Also involved in postreplication repair of UV-damaged DNA, in N-end rule-dependent protein degradation and in sporulation. This Emericella nidulans (strain FGSC A4 / ATCC 38163 / CBS 112.46 / NRRL 194 / M139) (Aspergillus nidulans) protein is Ubiquitin-conjugating enzyme E2 2 (uvsJ).